The primary structure comprises 953 residues: UvrABC system protein A (953 aa).

Residue glycine 33 to serine 40 participates in ATP binding. ABC transporter domains lie at tryptophan 320 to isoleucine 599 and glycine 619 to lysine 949. ATP is bound at residue glycine 652–serine 659. The segment at cysteine 752–cysteine 778 adopts a C4-type zinc-finger fold.

The protein belongs to the ABC transporter superfamily. UvrA family. Forms a heterotetramer with UvrB during the search for lesions.

The protein resides in the cytoplasm. The UvrABC repair system catalyzes the recognition and processing of DNA lesions. UvrA is an ATPase and a DNA-binding protein. A damage recognition complex composed of 2 UvrA and 2 UvrB subunits scans DNA for abnormalities. When the presence of a lesion has been verified by UvrB, the UvrA molecules dissociate. This Rickettsia prowazekii (strain Madrid E) protein is UvrABC system protein A.